A 4903-amino-acid polypeptide reads, in one-letter code: Histone-lysine N-methyltransferase 2C (4903 aa).

Disordered regions lie at residues 1 to 116 and 159 to 202; these read MSSE…SEES and LTLP…PPQQ. The segment covering 13–28 has biased composition (pro residues); that stretch reads QPPPAPPEEPGAPAPS. A phosphoserine mark is found at S28 and S46. The a.T hook DNA-binding region spans 34 to 46; it reads KRPRGRPRKDGAS. Over residues 50–59 the composition is skewed to basic residues; that stretch reads RARKKPRSRG. The span at 64-81 shows a compositional bias: acidic residues; that stretch reads EDEDSMDGLETTETENIV. Phosphoserine occurs at positions 89 and 113. Polar residues predominate over residues 101 to 116; sequence SKQPVSALQRSVSEES. A C2HC pre-PHD-type 1; degenerate zinc finger spans residues 226–261; that stretch reads ELSLVGLPDAIDVQALFDSTGTCWAHHRCVEWSLGI. PHD-type zinc fingers lie at residues 282-330, 340-390, 387-437, and 463-519; these read ERCA…PEHI, DANC…CKVC, CKVC…CRIC, and DNLC…CKHL. The RING-type zinc finger occupies 343–388; the sequence is CAVCDSPGDLLDQFFCTTCGQHYHGMCLDIAVTPLKRAGWQCPECK. In terms of domain architecture, DHHC spans 435 to 488; the sequence is RICIECGTRSSTQWHHNCLICDTCYQQQDNLCPFCGKCYHPELQKDMLHCNMCK. The segment at 671–703 is disordered; the sequence is SEVASKELSPPKSAPETAAPEALLSPHSERSLS. Position 751 is an N6-acetyllysine (K751). Over residues 824–835 the composition is skewed to basic residues; it reads TKRKFSPGRPRS. 2 disordered regions span residues 824-857 and 882-904; these read TKRK…DTSE and GFPG…GRSK. Over residues 838–848 the composition is skewed to polar residues; that stretch reads GAWSNHNTVSP. The residue at position 847 (S847) is a Phosphoserine. 3 consecutive PHD-type zinc fingers follow at residues 950-1003, 1000-1050, and 1077-1132; these read QDMC…CTVC, CTVC…CVWC, and LSSC…CRPY. A disordered region spans residues 1208–1318; it reads AVLQTPPDIQ…PSRDDGWREQ (111 aa). The segment covering 1217–1263 has biased composition (basic and acidic residues); that stretch reads QSEHSRDGEMDDSREGELMDCDGKSESSPEREAGDDETKGIEGTDAI. S1294 is modified (phosphoserine). Positions 1309–1318 are enriched in basic and acidic residues; it reads PSRDDGWREQ. The stretch at 1330 to 1352 forms a coiled coil; sequence VAENTDKIKKRYRKRKNKLEETF. Disordered stretches follow at residues 1397–1419 and 1447–1473; these read SDPL…ADDP and HSDI…RPLT. Composition is skewed to polar residues over residues 1406-1415 and 1455-1471; these read TSAKPGTQGT and ADAS…SSRP. Position 1497 is an N6-acetyllysine (K1497). Disordered stretches follow at residues 1594–1617 and 1698–1757; these read NAIA…ENDT and VQMS…AKIE. The span at 1599–1617 shows a compositional bias: polar residues; it reads DPNSSWAPTTPSMEGENDT. The segment covering 1707–1717 has biased composition (low complexity); it reads RQQQQDSIDPS. Positions 1718–1742 are enriched in basic and acidic residues; that stretch reads SRIDSDLFKDPLKQRESEHEQEWKF. A coiled-coil region spans residues 1743–1790; sequence RQQMRQKSKQQAKIEATQKLEQVKNEQQQQQQQQQQQQQQQLASQHLL. At K1761 the chain carries N6-acetyllysine. A disordered region spans residues 1791 to 2375; the sequence is VAPGSDTPSS…MSQADTEKLR (585 aa). Residues 1796–1819 are compositionally biased toward polar residues; it reads DTPSSGAQSPLTPQAGNGNVSPAQ. Residues 1855 to 1886 are compositionally biased toward low complexity; the sequence is PSRIPVQESLSQSQNSQPPSPQMFSPGSSHSR. Position 1983 is a phosphoserine (S1983). Positions 1986 to 2001 are enriched in polar residues; the sequence is ISEQSTKGPLTTGTSD. Residue K2005 is modified to N6-acetyllysine. Composition is skewed to polar residues over residues 2113 to 2124, 2137 to 2151, and 2325 to 2334; these read GTISRSASQDPY, SYSQ…NPDP, and GNFSTSSNLP. Residues 2335–2347 show a composition bias toward low complexity; it reads VSSQGQQFSSVSQ. Residues 2355–2369 are compositionally biased toward polar residues; that stretch reads SGGTDTQNTVNMSQA. Asymmetric dimethylarginine occurs at positions 2447 and 2563. Disordered stretches follow at residues 2561–2668, 2702–2736, and 2786–2844; these read RSRL…DNLE, KDLD…NDPN, and VEPK…GDAD. Composition is skewed to polar residues over residues 2602–2611, 2621–2636, and 2653–2668; these read QPSQCLSNQL, PPSQ…QSSI, and PLST…DNLE. The span at 2788 to 2807 shows a compositional bias: basic and acidic residues; it reads PKTRDQGDKTMVLEDKDLPQ. An N6-acetyllysine mark is found at K2796 and K2803. S2822 carries the phosphoserine modification. Y2824 is modified (phosphotyrosine). Residues 2825–2843 are compositionally biased toward basic and acidic residues; that stretch reads SKEEIQSEIKNHDDSRGDA. N6-acetyllysine occurs at positions 2826 and 2862. Residues 2920–2953 form a disordered region; it reads EKCDDSDIRPSGSSPPSLPISPSTHGSSLPPTLI. Low complexity predominate over residues 2929-2942; that stretch reads PSGSSPPSLPISPS. Coiled-coil stretches lie at residues 3047–3074 and 3166–3193; these read LLQD…QRSE and NDSQ…YLEE. Residues 3198–3214 show a composition bias toward basic residues; the sequence is HRKSKKALSAKQRTAKK. The segment at 3198-3223 is disordered; the sequence is HRKSKKALSAKQRTAKKAGREFPEED. 2 coiled-coil regions span residues 3224–3270 and 3387–3432; these read AEQL…QQCA and FSES…QHCL. 2 disordered regions span residues 3329–3407 and 3444–3910; these read PGWQ…QERQ and SQMP…QKMA. A compositionally biased stretch (basic and acidic residues) spans 3391 to 3407; the sequence is FQERERKERLREQQERQ. The segment covering 3464 to 3485 has biased composition (low complexity); it reads LQQSPQHQQQIGPVLQQQNVQQ. 4 stretches are compositionally biased toward polar residues: residues 3486–3503, 3515–3524, 3557–3586, and 3632–3647; these read GSVN…NEQR, PSASGGSPNF, PVAN…SLIQ, and LSET…PSEL. 2 stretches are compositionally biased toward basic and acidic residues: residues 3697 to 3739 and 3795 to 3804; these read AEAD…KIKD and SSTKDGKLIE. K3709 is subject to N6-acetyllysine. Over residues 3871–3885 the composition is skewed to polar residues; sequence MYSSSDSFTHLKQQN. The span at 3890-3904 shows a compositional bias: pro residues; it reads PPTPPASLPPTPPPM. S4027 bears the Phosphoserine mark. R4132 is subject to Asymmetric dimethylarginine. The segment at 4159–4184 is disordered; that stretch reads PNVPFPPTSNGLSGYKDSSHGPAEGA. S4260 is subject to Phosphoserine. A C2HC pre-PHD-type 2 zinc finger spans residues 4391 to 4431; that stretch reads CRKCCFCHEEGDGLTDGPARLLNLDLDLWVHLNCALWSTEV. The PHD-type 8 zinc finger occupies 4452-4499; that stretch reads MKCVFCHKTGATSGCHRFRCTNIYHFTCATKAQCMFFKDKTMLCPMHK. An FYR N-terminal domain is found at 4537 to 4597; sequence DHTFRVGSLI…CRYLCSIEEK (61 aa). An FYR C-terminal domain is found at 4598–4683; sequence DGRPVFVIRI…EACENYTFRY (86 aa). The short motif at 4699 to 4704 is the WDR5 interaction motif (WIN) element; it reads GCARSE. Residues 4763 to 4879 enclose the SET domain; sequence SNVYLARSRI…KGEELCYDYK (117 aa). S-adenosyl-L-methionine contacts are provided by residues Y4817 and 4840-4841; that span reads NH. Residues C4843, C4891, C4893, and C4898 each coordinate Zn(2+). The region spanning 4887–4903 is the Post-SET domain; that stretch reads HKIPCHCGAVNCRKWMN.

It belongs to the class V-like SAM-binding methyltransferase superfamily. Histone-lysine methyltransferase family. TRX/MLL subfamily. In terms of assembly, component of the MLL3 complex (also named ASCOM complex), at least composed of catalytic subunit KMT2C/MLL3, ASH2L, RBBP5, WDR5, NCOA6, DPY30, KDM6A, PAXIP1/PTIP, PAGR1 and alpha- and beta-tubulin. Forms a core complex with the evolutionary conserved subcomplex WRAD composed of WDR5, RBBP5, ASH2L/ASH2 and DPY30 subunits; WRAD differentially stimulates the methyltransferase activity. Interacts (via WIN motif) with WDR5. As to expression, in adult, detected in testis, kidney, spleen and lung, weakly expressed in brain and absent in heart and liver. First detected throughout the embryo at 8 dpc when expression is strong in forebrain neuroepithelium and absent in heart. Expressed in the eye lens between 10 and 14.5 dpc. By 13 dpc, expressed strongly in spinal cord, hand/foot plates and gonads.

The protein resides in the nucleus. The enzyme catalyses L-lysyl(4)-[histone H3] + S-adenosyl-L-methionine = N(6)-methyl-L-lysyl(4)-[histone H3] + S-adenosyl-L-homocysteine + H(+). Its function is as follows. Histone methyltransferase that catalyzes methyl group transfer from S-adenosyl-L-methionine to the epsilon-amino group of 'Lys-4' of histone H3 (H3K4). Part of chromatin remodeling machinery predominantly forms H3K4me1 methylation marks at active chromatin sites where transcription and DNA repair take place. Likely plays a redundant role with KMT2D in enriching H3K4me1 mark on primed and active enhancer elements. This Mus musculus (Mouse) protein is Histone-lysine N-methyltransferase 2C (Kmt2c).